The chain runs to 291 residues: Bifunctional protein FolD (291 aa).

Residues 165–167 (GRS), Ser190, and Ile231 contribute to the NADP(+) site.

This sequence belongs to the tetrahydrofolate dehydrogenase/cyclohydrolase family. In terms of assembly, homodimer.

It catalyses the reaction (6R)-5,10-methylene-5,6,7,8-tetrahydrofolate + NADP(+) = (6R)-5,10-methenyltetrahydrofolate + NADPH. The enzyme catalyses (6R)-5,10-methenyltetrahydrofolate + H2O = (6R)-10-formyltetrahydrofolate + H(+). The protein operates within one-carbon metabolism; tetrahydrofolate interconversion. Its function is as follows. Catalyzes the oxidation of 5,10-methylenetetrahydrofolate to 5,10-methenyltetrahydrofolate and then the hydrolysis of 5,10-methenyltetrahydrofolate to 10-formyltetrahydrofolate. This is Bifunctional protein FolD from Azoarcus sp. (strain BH72).